We begin with the raw amino-acid sequence, 796 residues long: N-terminal acetyltransferase B complex subunit MDM20 (796 aa).

An N-acetylserine modification is found at Ser2.

Belongs to the MDM20/NAA25 family. Component of the N-terminal acetyltransferase B (NatB) complex, which is composed of NAT3 and MDM20.

The protein localises to the cytoplasm. In terms of biological role, non-catalytic subunit of the NatB N-terminal acetyltransferase, which catalyzes acetylation of the amino-terminal methionine residues of all proteins beginning with Met-Asp or Met-Glu and of some proteins beginning with Met-Asn or Met-Met. NatB acetylates TPM1 protein and regulates tropomyocin-actin interactions. MDM20 is required for mitochondrial inheritance during budding and together with TPM1, is essential for the integrity and assembly of actin cables. Genetically interacts with CIN8. In Saccharomyces cerevisiae (strain ATCC 204508 / S288c) (Baker's yeast), this protein is N-terminal acetyltransferase B complex subunit MDM20 (MDM20).